We begin with the raw amino-acid sequence, 67 residues long: Phycobilisome 7.8 kDa linker polypeptide, allophycocyanin-associated, core (67 aa).

A CpcD-like domain is found at 1–56 (MRMFKITACVPSQTRIRTQRELQNTYFTKLVPYENWFREQQRIQKMGGKIVKVELF).

This sequence belongs to the phycobilisome linker protein family.

The protein resides in the cellular thylakoid membrane. Rod linker protein, associated with allophycocyanin. Linker polypeptides determine the state of aggregation and the location of the disk-shaped phycobiliprotein units within the phycobilisome and modulate their spectroscopic properties in order to mediate a directed and optimal energy transfer. The chain is Phycobilisome 7.8 kDa linker polypeptide, allophycocyanin-associated, core (apcC) from Thermosynechococcus vestitus (strain NIES-2133 / IAM M-273 / BP-1).